The sequence spans 102 residues: RNA-binding protein Hfq (102 aa).

One can recognise a Sm domain in the interval 9–68 (DPFLNALRRERVPVSIYLVNGIKLQGQIESFDQFVILLKNTVSQMVYKHAISTVVPSRPV). Residues 63 to 102 (VPSRPVSHHSNNAGGGASNNYHHGSNVQGSTAQQDSEETE) are disordered. Residues 70-88 (HHSNNAGGGASNNYHHGSN) show a composition bias toward low complexity.

This sequence belongs to the Hfq family. In terms of assembly, homohexamer.

Its function is as follows. RNA chaperone that binds small regulatory RNA (sRNAs) and mRNAs to facilitate mRNA translational regulation in response to envelope stress, environmental stress and changes in metabolite concentrations. Also binds with high specificity to tRNAs. This Salmonella choleraesuis (strain SC-B67) protein is RNA-binding protein Hfq.